We begin with the raw amino-acid sequence, 171 residues long: UPF0260 protein Nham_1404 (171 aa).

The protein belongs to the UPF0260 family.

This chain is UPF0260 protein Nham_1404, found in Nitrobacter hamburgensis (strain DSM 10229 / NCIMB 13809 / X14).